The primary structure comprises 388 residues: Succinate--CoA ligase [ADP-forming] subunit beta (388 aa).

Positions 9–244 constitute an ATP-grasp domain; it reads KEILRKFGVA…PDEEDPKETQ (236 aa). ATP-binding positions include lysine 46, 53–55, glutamate 99, cysteine 102, and glutamate 107; that span reads GRG. Mg(2+) is bound by residues asparagine 199 and aspartate 213. Residues asparagine 264 and 321 to 323 each bind substrate; that span reads GIM.

Belongs to the succinate/malate CoA ligase beta subunit family. Heterotetramer of two alpha and two beta subunits. Mg(2+) is required as a cofactor.

It catalyses the reaction succinate + ATP + CoA = succinyl-CoA + ADP + phosphate. The enzyme catalyses GTP + succinate + CoA = succinyl-CoA + GDP + phosphate. It participates in carbohydrate metabolism; tricarboxylic acid cycle; succinate from succinyl-CoA (ligase route): step 1/1. Succinyl-CoA synthetase functions in the citric acid cycle (TCA), coupling the hydrolysis of succinyl-CoA to the synthesis of either ATP or GTP and thus represents the only step of substrate-level phosphorylation in the TCA. The beta subunit provides nucleotide specificity of the enzyme and binds the substrate succinate, while the binding sites for coenzyme A and phosphate are found in the alpha subunit. The chain is Succinate--CoA ligase [ADP-forming] subunit beta from Anaeromyxobacter dehalogenans (strain 2CP-1 / ATCC BAA-258).